The primary structure comprises 153 residues: Ribonuclease HI (153 aa).

One can recognise an RNase H type-1 domain in the interval 1–141 (MKSVNIFTDG…CDELAKLGAN (141 aa)). The Mg(2+) site is built by D9, E47, D69, and D133.

The protein belongs to the RNase H family. Monomer. Mg(2+) serves as cofactor.

It is found in the cytoplasm. The catalysed reaction is Endonucleolytic cleavage to 5'-phosphomonoester.. Its function is as follows. Endonuclease that specifically degrades the RNA of RNA-DNA hybrids. This Haemophilus ducreyi (strain 35000HP / ATCC 700724) protein is Ribonuclease HI.